The primary structure comprises 301 residues: Homoserine O-acetyltransferase (301 aa).

C142 (acyl-thioester intermediate) is an active-site residue. Positions 163 and 192 each coordinate substrate. H235 acts as the Proton acceptor in catalysis. The active site involves E237. R249 contributes to the substrate binding site.

The protein belongs to the MetA family.

The protein localises to the cytoplasm. The catalysed reaction is L-homoserine + acetyl-CoA = O-acetyl-L-homoserine + CoA. It functions in the pathway amino-acid biosynthesis; L-methionine biosynthesis via de novo pathway; O-acetyl-L-homoserine from L-homoserine: step 1/1. Its function is as follows. Transfers an acetyl group from acetyl-CoA to L-homoserine, forming acetyl-L-homoserine. The polypeptide is Homoserine O-acetyltransferase (Bacillus anthracis (strain A0248)).